Reading from the N-terminus, the 1025-residue chain is Multidrug resistance protein MdtC (1025 aa).

Helical transmembrane passes span 3–23, 333–353, 360–380, 387–407, 431–451, 463–483, 528–548, 853–873, 875–895, 897–917, 953–973, and 984–1004; these read FFAL…AITL, EVEQ…FLFL, IIPA…MYLC, LSLM…IVVL, VGFT…PLLL, FAVT…TLTP, LVGV…ISIP, VILI…LYES, VHPL…LLAL, LFNA…IGIV, PIMM…LSGG, and ITIV…TPVV.

It belongs to the resistance-nodulation-cell division (RND) (TC 2.A.6) family. MdtC subfamily. Part of a tripartite efflux system composed of MdtA, MdtB and MdtC. MdtC forms a heteromultimer with MdtB.

The protein resides in the cell inner membrane. Functionally, the MdtABC tripartite complex confers resistance against novobiocin and deoxycholate. This chain is Multidrug resistance protein MdtC, found in Escherichia coli O127:H6 (strain E2348/69 / EPEC).